A 412-amino-acid polypeptide reads, in one-letter code: Lipid droplet organization protein LDO45 (412 aa).

Residues methionine 1 to asparagine 170 lie on the Cytoplasmic side of the membrane. Residues serine 171 to glycine 191 form a helical membrane-spanning segment. At aspartate 192–lysine 247 the chain is on the lumenal side. A helical membrane pass occupies residues valine 248 to threonine 268. At alanine 269–phenylalanine 271 the chain is on the cytoplasmic side. Residues phenylalanine 272–isoleucine 292 form a helical membrane-spanning segment. Proline 293 is a topological domain (lumenal). A helical transmembrane segment spans residues leucine 294–methionine 314. Residues serine 315 to serine 412 lie on the Cytoplasmic side of the membrane. Residues glutamine 347–proline 374 form a disordered region. The segment covering arginine 357–arginine 373 has biased composition (polar residues).

In terms of assembly, interacts specifically with the seipin complex FLD1-LDB16. Only a fraction appears to associate with the seipin core components, suggesting that it may be an ancillary subunit of the complex.

The protein localises to the endoplasmic reticulum membrane. It is found in the lipid droplet. Functionally, involved in lipid droplet (LD) organization. Modulates triglyceride (TAG) storage by reducing DGA1 LD localization. Promotes LD targeting of some proteins, including PDR16. The polypeptide is Lipid droplet organization protein LDO45 (Saccharomyces cerevisiae (strain ATCC 204508 / S288c) (Baker's yeast)).